Consider the following 279-residue polypeptide: DegV domain-containing protein spr1019 (279 aa).

Residues 4–277 (IKIVTDSSVT…ENAWAILIRY (274 aa)) enclose the DegV domain. Residues threonine 62 and serine 94 each coordinate hexadecanoate.

Its function is as follows. May bind long-chain fatty acids, such as palmitate, and may play a role in lipid transport or fatty acid metabolism. This chain is DegV domain-containing protein spr1019, found in Streptococcus pneumoniae (strain ATCC BAA-255 / R6).